The primary structure comprises 258 residues: Large ribosomal subunit protein uL3 (258 aa).

The protein belongs to the universal ribosomal protein uL3 family. Part of the 50S ribosomal subunit. Forms a cluster with proteins L14 and L19.

Functionally, one of the primary rRNA binding proteins, it binds directly near the 3'-end of the 23S rRNA, where it nucleates assembly of the 50S subunit. The chain is Large ribosomal subunit protein uL3 from Spiroplasma kunkelii.